A 420-amino-acid chain; its full sequence is Tyrosine--tRNA ligase (420 aa).

Residue Tyr-39 coordinates L-tyrosine. The 'HIGH' region motif lies at 44–53 (CTAPSLHIGS). L-tyrosine is bound by residues Tyr-176 and Gln-180. The 'KMSKS' region motif lies at 236–240 (KMGKT). Lys-239 contacts ATP. An S4 RNA-binding domain is found at 349-414 (IPLIDLLYDT…AGKKRHIKIL (66 aa)).

This sequence belongs to the class-I aminoacyl-tRNA synthetase family. TyrS type 1 subfamily. As to quaternary structure, homodimer.

Its subcellular location is the cytoplasm. The catalysed reaction is tRNA(Tyr) + L-tyrosine + ATP = L-tyrosyl-tRNA(Tyr) + AMP + diphosphate + H(+). Functionally, catalyzes the attachment of tyrosine to tRNA(Tyr) in a two-step reaction: tyrosine is first activated by ATP to form Tyr-AMP and then transferred to the acceptor end of tRNA(Tyr). This Wolbachia pipientis subsp. Culex pipiens (strain wPip) protein is Tyrosine--tRNA ligase.